A 75-amino-acid polypeptide reads, in one-letter code: Putative membrane protein insertion efficiency factor (75 aa).

It belongs to the UPF0161 family.

The protein localises to the cell membrane. Could be involved in insertion of integral membrane proteins into the membrane. The protein is Putative membrane protein insertion efficiency factor of Bacillus cytotoxicus (strain DSM 22905 / CIP 110041 / 391-98 / NVH 391-98).